We begin with the raw amino-acid sequence, 1951 residues long: Sodium channel protein type 3 subunit alpha (1951 aa).

Residues 1 to 128 (MAQALLVPPG…KIAIKILVHS (128 aa)) are Cytoplasmic-facing. Positions 28–60 (RAAEEKAKKPKKEQDIDDENKPKPNSDLEAGKN) are disordered. Positions 46–57 (ENKPKPNSDLEA) are enriched in basic and acidic residues. An I repeat occupies 110–455 (ILTPLNPVRK…QQMLEQLKKQ (346 aa)). Residues 129-146 (LFSMLIMCTILTNCVFMT) traverse the membrane as a helical segment. Residues 147-152 (LSNPPD) are Extracellular-facing. A helical transmembrane segment spans residues 153-174 (WTKNVEYTFTGIYTFESLIKIL). The Cytoplasmic portion of the chain corresponds to 175–188 (ARGFCLEDFTFLRD). A helical membrane pass occupies residues 189-206 (PWNWLDFSVIVMAYVTEF). Topologically, residues 207–213 (VDLGNVS) are extracellular. Residue N211 is glycosylated (N-linked (GlcNAc...) asparagine). The helical transmembrane segment at 214–235 (ALRTFRVLRALKTISVIPGLKT) threads the bilayer. Residues 236–249 (IVGALIQSVKKLSD) lie on the Cytoplasmic side of the membrane. A helical membrane pass occupies residues 250–269 (VMILTVFCLSVFALIGLQLF). The Extracellular portion of the chain corresponds to 270–369 (MGNLRNKCSQ…NYGYTSFDTF (100 aa)). Residues N290, N296, N302, N307, and N339 are each glycosylated (N-linked (GlcNAc...) asparagine). The pore-forming intramembrane region spans 370–386 (SWAFLSLFRLMTQDYWE). The Extracellular segment spans residues 387-397 (NLYQLTLRAAG). A helical transmembrane segment spans residues 398–424 (KTYMIFFVLVIFLGSFYLVNLILAVVA). Residues 425 to 712 (MAYEEQNQAT…LVNLIVMDPF (288 aa)) lie on the Cytoplasmic side of the membrane. Residues S484, S485, and S486 each carry the phosphoserine modification. Disordered stretches follow at residues 493–529 (SKSAKEWRNRRKKRRQREHLEGNHRADGDRFPKSESE) and 587–633 (VGSE…TEVR). Residues 500–509 (RNRRKKRRQR) are compositionally biased toward basic residues. Composition is skewed to basic and acidic residues over residues 510 to 529 (EHLEGNHRADGDRFPKSESE) and 596 to 622 (DEHSTFEDSESRRDSLFVPHRPGERRN). The stretch at 693 to 965 (CCDAWLKVKH…QIAVGRMQKG (273 aa)) is one II repeat. A helical transmembrane segment spans residues 713-730 (VDLAITICIVLNTLFMAM). The Extracellular portion of the chain corresponds to 731-738 (EHYPMTQQ). A helical membrane pass occupies residues 739–763 (FSSVLTVGNLVFTGIFTAEMVLKII). Residues 764-773 (AMDPYYYFQE) are Cytoplasmic-facing. The helical transmembrane segment at 774–793 (GWNIFDGIIVSLSLMELGLA) threads the bilayer. Over 794–797 (NVEG) the chain is Extracellular. A helical transmembrane segment spans residues 798-816 (LSVLRSFRLLRVFKLAKSW). At 817-834 (PTLNMLIKIIGNSVGALG) the chain is on the cytoplasmic side. Residues 835 to 855 (NLTLVLAIIVFIFAVVGMQLF) traverse the membrane as a helical segment. Residues 856 to 880 (GKSYKECVCKINVDCKLPRWHMNDF) are Extracellular-facing. An intrachain disulfide couples C864 to C870. The pore-forming intramembrane region spans 881–896 (FHSFLIVFRVLCGEWI). Topologically, residues 897–907 (ETMWDCMEVAG) are extracellular. An intrachain disulfide couples C902 to C911. A helical membrane pass occupies residues 908 to 934 (QTMCLIVFMLVMVIGNLVVLNLFLALL). Topologically, residues 935–1156 (LSSFSSDNLA…RKTCYSIVEH (222 aa)) are cytoplasmic. A disordered region spans residues 1068 to 1112 (TEEFSSESELEESKEKLNATSSSEGSTVDVAPPREGEQAEIEPEE). The stretch at 1139–1450 (KGKIWWNLRK…KKYYNAMKKL (312 aa)) is one III repeat. The helical transmembrane segment at 1157 to 1177 (NWFETFIVFMILLSSGALAFE) threads the bilayer. Residues 1178–1189 (DIYIEQRKTIKT) lie on the Extracellular side of the membrane. The chain crosses the membrane as a helical span at residues 1190–1211 (MLEYADKVFTYIFILEMLLKWV). Residues 1212-1217 (AYGFQT) are Cytoplasmic-facing. The chain crosses the membrane as a helical span at residues 1218-1243 (YFTNAWCWLDFLIVDVSLVSLVANAL). The Extracellular portion of the chain corresponds to 1244 to 1252 (GYSELGAIK). The helical transmembrane segment at 1253–1271 (SLRTLRALRPLRALSRFEG) threads the bilayer. Residues 1272–1284 (MRVVVNALVGAIP) are Cytoplasmic-facing. Residues 1285–1307 (SIMNVLLVCLIFWLIFSIMGVNL) traverse the membrane as a helical segment. Over 1308 to 1353 (FAGKFYHCVNTTTGNMFEIKEVNNFSDCQALGKQARWKNVKVNFDN) the chain is Extracellular. C1315 and C1335 are disulfide-bonded. Residues N1317 and N1331 are each glycosylated (N-linked (GlcNAc...) asparagine). Positions 1354–1370 (VGAGYLALLQVATFKGW) form an intramembrane region, pore-forming. Topologically, residues 1371-1393 (MDIMYAAVDSRDVKLQPIYEENL) are extracellular. Residues 1394 to 1419 (YMYLYFVIFIIFGSFFTLNLFIGVII) traverse the membrane as a helical segment. Over 1420-1477 (DNFNQQKKKFGGQDIFMTEEQKKYYNAMKKLGSKKPQKPIPRPANKFQGMVFDFVTRQ) the chain is Cytoplasmic. A Phosphoserine; by PKC modification is found at S1452. The IV repeat unit spans residues 1459–1757 (IPRPANKFQG…WEKFDPDATQ (299 aa)). A helical transmembrane segment spans residues 1478 to 1496 (VFDISIMILICLNMVTMMV). At 1497–1504 (ETDDQSKY) the chain is on the extracellular side. The chain crosses the membrane as a helical span at residues 1505–1528 (MTLVLSRINLVFIVLFTGEFLLKL). The Cytoplasmic portion of the chain corresponds to 1529–1538 (ISLRYYYFTI). The helical transmembrane segment at 1539 to 1556 (GWNIFDFVVVILSIVGMF) threads the bilayer. Topologically, residues 1557 to 1568 (LAELIEKYFVSP) are extracellular. A helical transmembrane segment spans residues 1569–1591 (TLFRVIRLARIGRILRLIKGAKG). The Cytoplasmic segment spans residues 1592 to 1604 (IRTLLFALMMSLP). A helical membrane pass occupies residues 1605-1628 (ALFNIGLLLFLVMFIYAIFGMSNF). Topologically, residues 1629–1650 (AYVKKEAGIDDMFNFETFGNSM) are extracellular. An intramembrane region (pore-forming) is located at residues 1651–1663 (ICLFQITTSAGWD). Topologically, residues 1664–1695 (GLLAPILNSAPPDCDPDAIHPGSSVKGDCGNP) are extracellular. Residues 1696–1721 (SVGIFFFVSYIIISFLVVVNMYIAVI) traverse the membrane as a helical segment. At 1722 to 1951 (LENFSVATEE…KGKEVRENQK (230 aa)) the chain is on the cytoplasmic side. Residues 1851–1880 (EEVSAAIIQRNYRCYLLKQRLKNISSKYDK) enclose the IQ domain. The segment at 1898–1951 (DKLNGNSTPEKTDGSSSTTSPPSYDSVTKPDKEKFEKDKPEKEIKGKEVRENQK) is disordered. Residues 1925 to 1951 (TKPDKEKFEKDKPEKEIKGKEVRENQK) are compositionally biased toward basic and acidic residues.

The protein belongs to the sodium channel (TC 1.A.1.10) family. Nav1.3/SCN3A subfamily. In terms of assembly, heterooligomer of an alpha subunit, SCN3A, and 1 to 3 regulatory beta subunits including SCN1B and SCN2B; disulfide-linked with some beta subunits like SCN2B. Interacts with NEDD4L; could regulate expression of SCN3A at the plasma membrane through ubiquitination-regulated endocytosis. Interacts with the conotoxin GVIIJ. Interacts with the spider beta/delta-theraphotoxin-Pre1a. Interacts with the spider RTX-VII toxin (AC P0DL75). May be ubiquitinated by NEDD4L; which would promote its endocytosis. In terms of processing, phosphorylation at Ser-1452 by PKC in a highly conserved cytoplasmic loop slows inactivation of the sodium channel and reduces peak sodium currents.

The protein localises to the cell membrane. It is found in the basal cell membrane. It catalyses the reaction Na(+)(in) = Na(+)(out). In terms of biological role, pore-forming subunit of Nav1.3, a voltage-gated sodium (Nav) channel that directly mediates the depolarizing phase of action potentials in excitable membranes. Navs, also called VGSCs (voltage-gated sodium channels) or VDSCs (voltage-dependent sodium channels), operate by switching between closed and open conformations depending on the voltage difference across the membrane. In the open conformation they allow Na(+) ions to selectively pass through the pore, along their electrochemical gradient. The influx of Na+ ions provokes membrane depolarization, initiating the propagation of electrical signals throughout cells and tissues. In some secretory cell types, it also participates in cell excitability through membrane depolarization and regulates cells responsiveness to stimuli triggering secretion. For instance, it controls the release of serotonin/5-hydroxytryptamine by enterochromaffin cells and is required for both glucagon- and glucose-induced insulin secretion in pancreatic endocrine cells. The polypeptide is Sodium channel protein type 3 subunit alpha (Rattus norvegicus (Rat)).